Consider the following 436-residue polypeptide: Trigger factor (436 aa).

Positions 163–248 (GDRATIDFEG…VKKIEAAHLP (86 aa)) constitute a PPIase FKBP-type domain.

It belongs to the FKBP-type PPIase family. Tig subfamily.

The protein localises to the cytoplasm. The catalysed reaction is [protein]-peptidylproline (omega=180) = [protein]-peptidylproline (omega=0). Functionally, involved in protein export. Acts as a chaperone by maintaining the newly synthesized protein in an open conformation. Functions as a peptidyl-prolyl cis-trans isomerase. This is Trigger factor from Polaromonas sp. (strain JS666 / ATCC BAA-500).